The primary structure comprises 167 residues: Transcription factor E (167 aa).

Residues 8-90 (NDKVIRGYLI…LWHLDFSDVE (83 aa)) form the HTH TFE/IIEalpha-type domain.

It belongs to the TFE family. As to quaternary structure, monomer. Interaction with RNA polymerase subunits RpoF and RpoE is necessary for Tfe stimulatory transcription activity. Able to interact with Tbp and RNA polymerase in the absence of DNA promoter. Interacts both with the preinitiation and elongation complexes.

Its function is as follows. Transcription factor that plays a role in the activation of archaeal genes transcribed by RNA polymerase. Facilitates transcription initiation by enhancing TATA-box recognition by TATA-box-binding protein (Tbp), and transcription factor B (Tfb) and RNA polymerase recruitment. Not absolutely required for transcription in vitro, but particularly important in cases where Tbp or Tfb function is not optimal. It dynamically alters the nucleic acid-binding properties of RNA polymerases by stabilizing the initiation complex and destabilizing elongation complexes. Seems to translocate with the RNA polymerase following initiation and acts by binding to the non template strand of the transcription bubble in elongation complexes. The polypeptide is Transcription factor E (Methanosarcina acetivorans (strain ATCC 35395 / DSM 2834 / JCM 12185 / C2A)).